Consider the following 159-residue polypeptide: Transcription elongation factor GreA (159 aa).

Residues 44-75 (SENAEYDAAREQQSQTEARIADLESKLSSATI) adopt a coiled-coil conformation.

It belongs to the GreA/GreB family.

Functionally, necessary for efficient RNA polymerase transcription elongation past template-encoded arresting sites. The arresting sites in DNA have the property of trapping a certain fraction of elongating RNA polymerases that pass through, resulting in locked ternary complexes. Cleavage of the nascent transcript by cleavage factors such as GreA or GreB allows the resumption of elongation from the new 3'terminus. GreA releases sequences of 2 to 3 nucleotides. In Chlorobium phaeovibrioides (strain DSM 265 / 1930) (Prosthecochloris vibrioformis (strain DSM 265)), this protein is Transcription elongation factor GreA.